A 356-amino-acid chain; its full sequence is Guanine nucleotide-binding protein alpha-15 subunit (356 aa).

Residue Gly2 is the site of N-myristoyl glycine attachment. Residue Cys5 is the site of S-palmitoyl cysteine attachment. In terms of domain architecture, G-alpha spans 33–356 (GNQKLLLLGT…GRNLRGTGME (324 aa)). The interval 36-49 (KLLLLGTGECGKST) is G1 motif. GTP is bound by residues 41-48 (GTGECGKS), 177-183 (LRIRIPT), 202-206 (DVGGQ), 271-274 (NKRD), and Ala328. Positions 48 and 183 each coordinate Mg(2+). The segment at 175–183 (DMLRIRIPT) is G2 motif. The G3 motif stretch occupies residues 198-207 (FRIFDVGGQR). A G4 motif region spans residues 267-274 (ILFLNKRD). A G5 motif region spans residues 326–331 (TCATDT).

This sequence belongs to the G-alpha family. As to quaternary structure, g proteins are composed of 3 units; alpha, beta and gamma. The alpha chain contains the guanine nucleotide binding site.

In terms of biological role, guanine nucleotide-binding proteins (G proteins) are involved as modulators or transducers in various transmembrane signaling systems. This Caenorhabditis briggsae protein is Guanine nucleotide-binding protein alpha-15 subunit (gpa-15).